The following is a 373-amino-acid chain: UDP-N-acetylglucosamine--N-acetylmuramyl-(pentapeptide) pyrophosphoryl-undecaprenol N-acetylglucosamine transferase (373 aa).

Residues 14 to 16 (TAG), Asn128, Arg165, Ser199, and Gln295 each bind UDP-N-acetyl-alpha-D-glucosamine.

It belongs to the glycosyltransferase 28 family. MurG subfamily.

It is found in the cell membrane. The enzyme catalyses di-trans,octa-cis-undecaprenyl diphospho-N-acetyl-alpha-D-muramoyl-L-alanyl-D-glutamyl-meso-2,6-diaminopimeloyl-D-alanyl-D-alanine + UDP-N-acetyl-alpha-D-glucosamine = di-trans,octa-cis-undecaprenyl diphospho-[N-acetyl-alpha-D-glucosaminyl-(1-&gt;4)]-N-acetyl-alpha-D-muramoyl-L-alanyl-D-glutamyl-meso-2,6-diaminopimeloyl-D-alanyl-D-alanine + UDP + H(+). Its pathway is cell wall biogenesis; peptidoglycan biosynthesis. Functionally, cell wall formation. Catalyzes the transfer of a GlcNAc subunit on undecaprenyl-pyrophosphoryl-MurNAc-pentapeptide (lipid intermediate I) to form undecaprenyl-pyrophosphoryl-MurNAc-(pentapeptide)GlcNAc (lipid intermediate II). The chain is UDP-N-acetylglucosamine--N-acetylmuramyl-(pentapeptide) pyrophosphoryl-undecaprenol N-acetylglucosamine transferase from Mycobacterium sp. (strain KMS).